Reading from the N-terminus, the 1193-residue chain is Kinesin-related protein 3 (1193 aa).

The Kinesin motor domain maps to 3–329 (SIRVVCRFRP…LRFGSRAKNI (327 aa)). 85-92 (GQTGSGKT) lines the ATP pocket. Disordered regions lie at residues 377 to 429 (KSSG…SSNV), 573 to 600 (SSIA…KHAD), 611 to 630 (LLQR…TATS), 638 to 665 (ISES…ATSS), 973 to 1016 (GGGG…SANL), 1032 to 1114 (KAEP…PVKI), and 1127 to 1193 (FKKK…QQKD). Over residues 405 to 429 (SSNLSNSVNSTSNLNTSSNTSSSNV) the composition is skewed to low complexity. Positions 450 to 962 (ELIKVLQEKC…SQVGVDAQNT (513 aa)) form a coiled coil. Composition is skewed to polar residues over residues 573-585 (SSIA…TPKS) and 614-630 (RTPS…TATS). Composition is skewed to low complexity over residues 643 to 665 (NIGS…ATSS) and 985 to 1006 (HSSS…NNNH). Positions 1007 to 1016 (TTPTPLSANL) are enriched in polar residues. 3 stretches are compositionally biased toward low complexity: residues 1044 to 1078 (NTSI…IGNS), 1086 to 1109 (NNNS…LNGN), and 1132 to 1149 (PSST…QSPQ). Polar residues-rich tracts occupy residues 1150-1165 (TPSH…ISPN) and 1174-1193 (FSYT…QQKD).

Belongs to the TRAFAC class myosin-kinesin ATPase superfamily. Kinesin family. Kinesin subfamily. Dimer.

The protein resides in the cytoplasm. It is found in the cytoskeleton. Its function is as follows. Microtubule-associated force-producing protein that plays a role in organelle transport. Its motor activity is directed toward the microtubule's plus end. The maximal velocity in an inverted motility assay (moving microtubules on fixed motors) was 1.96 um/s. In Dictyostelium discoideum (Social amoeba), this protein is Kinesin-related protein 3 (kif3).